The following is a 32-amino-acid chain: Unknown protein from spot 206 of 2D-PAGE of etiolated coleoptile (32 aa).

The sequence is that of Unknown protein from spot 206 of 2D-PAGE of etiolated coleoptile from Zea mays (Maize).